A 624-amino-acid polypeptide reads, in one-letter code: tRNA uridine 5-carboxymethylaminomethyl modification enzyme MnmG (624 aa).

Residues 13–18 (GGGHAG), valine 125, and serine 180 contribute to the FAD site. NAD(+) is bound at residue 273–287 (GPRYCPSIEDKIVRF). Residue glutamine 370 participates in FAD binding.

It belongs to the MnmG family. Homodimer. Heterotetramer of two MnmE and two MnmG subunits. FAD is required as a cofactor.

It localises to the cytoplasm. In terms of biological role, NAD-binding protein involved in the addition of a carboxymethylaminomethyl (cmnm) group at the wobble position (U34) of certain tRNAs, forming tRNA-cmnm(5)s(2)U34. The polypeptide is tRNA uridine 5-carboxymethylaminomethyl modification enzyme MnmG (Legionella pneumophila (strain Corby)).